Reading from the N-terminus, the 217-residue chain is tRNA (guanine-N(7)-)-methyltransferase (217 aa).

Positions 44, 69, 96, and 118 each coordinate S-adenosyl-L-methionine. Residue Asp-118 is part of the active site. Substrate is bound by residues Lys-122, Asp-154, and 191–194; that span reads TEYE.

This sequence belongs to the class I-like SAM-binding methyltransferase superfamily. TrmB family.

It catalyses the reaction guanosine(46) in tRNA + S-adenosyl-L-methionine = N(7)-methylguanosine(46) in tRNA + S-adenosyl-L-homocysteine. It functions in the pathway tRNA modification; N(7)-methylguanine-tRNA biosynthesis. Functionally, catalyzes the formation of N(7)-methylguanine at position 46 (m7G46) in tRNA. This chain is tRNA (guanine-N(7)-)-methyltransferase, found in Bacillus mycoides (strain KBAB4) (Bacillus weihenstephanensis).